Consider the following 127-residue polypeptide: LIM domain-containing protein 2 (127 aa).

Met-1 is modified (N-acetylmethionine). The segment at 1–24 is disordered; sequence MFQAAGAAQATPSHDAKGGGSSTV. The LIM zinc-binding domain occupies 38–98; that stretch reads ETCAACQKTV…KPHFQQLFKS (61 aa). Positions 40, 43, 61, 64, 67, 70, 88, and 91 each coordinate Zn(2+).

Interacts with ILK.

It localises to the cytoplasm. The protein resides in the nucleus. Acts as an activator of the protein-kinase ILK, thereby regulating cell motility. The polypeptide is LIM domain-containing protein 2 (Homo sapiens (Human)).